A 503-amino-acid chain; its full sequence is Cytochrome P450 11B1, mitochondrial (503 aa).

Residues 1 to 24 (MALRAKAEVCMAVPWLSLQRAQAL) constitute a mitochondrion transit peptide. Cysteine 450 provides a ligand contact to heme.

This sequence belongs to the cytochrome P450 family. Requires heme as cofactor. In terms of tissue distribution, expressed in the zona fasciculata/reticularis of the adrenal cortex.

It localises to the mitochondrion inner membrane. It catalyses the reaction a steroid + 2 reduced [adrenodoxin] + O2 + 2 H(+) = an 11beta-hydroxysteroid + 2 oxidized [adrenodoxin] + H2O. The catalysed reaction is 11-deoxycortisol + 2 reduced [adrenodoxin] + O2 + 2 H(+) = cortisol + 2 oxidized [adrenodoxin] + H2O. The enzyme catalyses 21-hydroxyprogesterone + 2 reduced [adrenodoxin] + O2 + 2 H(+) = corticosterone + 2 oxidized [adrenodoxin] + H2O. The protein operates within steroid biosynthesis; glucocorticoid biosynthesis. It functions in the pathway steroid hormone biosynthesis. A cytochrome P450 monooxygenase involved in the biosynthesis of adrenal corticoids. Catalyzes a variety of reactions that are essential for many species, including detoxification, defense, and the formation of endogenous chemicals like steroid hormones. Steroid 11beta, 18- and 19-hydroxylase with preferred regioselectivity at 11beta, then 18, and lastly 19. Catalyzes the hydroxylation of 11-deoxycortisol and 11-deoxycorticosterone (21-hydroxyprogesterone) at 11beta position, yielding cortisol or corticosterone, respectively, but cannot produce aldosterone. Mechanistically, uses molecular oxygen inserting one oxygen atom into a substrate for hydroxylation and reducing the second into a water molecule. Two electrons are provided by NADPH via a two-protein mitochondrial transfer system comprising flavoprotein FDXR (adrenodoxin/ferredoxin reductase) and nonheme iron-sulfur protein FDX1 or FDX2 (adrenodoxin/ferredoxin). Due to its lack of 18-oxidation activity, it is incapable of generating aldosterone. Could also be involved in the androgen metabolic pathway. The polypeptide is Cytochrome P450 11B1, mitochondrial (Homo sapiens (Human)).